Here is a 269-residue protein sequence, read N- to C-terminus: Putative pyruvate, phosphate dikinase regulatory protein (269 aa).

G147–T154 contacts ADP.

Belongs to the pyruvate, phosphate/water dikinase regulatory protein family. PDRP subfamily.

The enzyme catalyses N(tele)-phospho-L-histidyl/L-threonyl-[pyruvate, phosphate dikinase] + ADP = N(tele)-phospho-L-histidyl/O-phospho-L-threonyl-[pyruvate, phosphate dikinase] + AMP + H(+). It carries out the reaction N(tele)-phospho-L-histidyl/O-phospho-L-threonyl-[pyruvate, phosphate dikinase] + phosphate + H(+) = N(tele)-phospho-L-histidyl/L-threonyl-[pyruvate, phosphate dikinase] + diphosphate. In terms of biological role, bifunctional serine/threonine kinase and phosphorylase involved in the regulation of the pyruvate, phosphate dikinase (PPDK) by catalyzing its phosphorylation/dephosphorylation. This chain is Putative pyruvate, phosphate dikinase regulatory protein, found in Geotalea uraniireducens (strain Rf4) (Geobacter uraniireducens).